A 578-amino-acid chain; its full sequence is 2-succinyl-5-enolpyruvyl-6-hydroxy-3-cyclohexene-1-carboxylate synthase (578 aa).

Belongs to the TPP enzyme family. MenD subfamily. In terms of assembly, homodimer. Requires Mg(2+) as cofactor. It depends on Mn(2+) as a cofactor. Thiamine diphosphate is required as a cofactor.

It catalyses the reaction isochorismate + 2-oxoglutarate + H(+) = 5-enolpyruvoyl-6-hydroxy-2-succinyl-cyclohex-3-ene-1-carboxylate + CO2. It participates in quinol/quinone metabolism; 1,4-dihydroxy-2-naphthoate biosynthesis; 1,4-dihydroxy-2-naphthoate from chorismate: step 2/7. Its pathway is quinol/quinone metabolism; menaquinone biosynthesis. In terms of biological role, catalyzes the thiamine diphosphate-dependent decarboxylation of 2-oxoglutarate and the subsequent addition of the resulting succinic semialdehyde-thiamine pyrophosphate anion to isochorismate to yield 2-succinyl-5-enolpyruvyl-6-hydroxy-3-cyclohexene-1-carboxylate (SEPHCHC). The protein is 2-succinyl-5-enolpyruvyl-6-hydroxy-3-cyclohexene-1-carboxylate synthase of Prosthecochloris aestuarii (strain DSM 271 / SK 413).